The sequence spans 141 residues: NADPH-dependent 7-cyano-7-deazaguanine reductase (141 aa).

Residue Cys34 is the Thioimide intermediate of the active site. Catalysis depends on Asp41, which acts as the Proton donor. Substrate is bound by residues 56–58 and 75–76; these read VEL and HE.

Belongs to the GTP cyclohydrolase I family. QueF type 1 subfamily.

It localises to the cytoplasm. It carries out the reaction 7-aminomethyl-7-carbaguanine + 2 NADP(+) = 7-cyano-7-deazaguanine + 2 NADPH + 3 H(+). It participates in tRNA modification; tRNA-queuosine biosynthesis. Its function is as follows. Catalyzes the NADPH-dependent reduction of 7-cyano-7-deazaguanine (preQ0) to 7-aminomethyl-7-deazaguanine (preQ1). The polypeptide is NADPH-dependent 7-cyano-7-deazaguanine reductase (Acidithiobacillus ferrooxidans (strain ATCC 23270 / DSM 14882 / CIP 104768 / NCIMB 8455) (Ferrobacillus ferrooxidans (strain ATCC 23270))).